We begin with the raw amino-acid sequence, 309 residues long: MARSWLDYKTQAWVQWCPGCGDFGILNSIYRAVSELGIDPENLAVVGGIGCSGRTTYYVKGSNFHALHGRAIPVATGVKLANPHLNVIVAGGDGDLMGIGGGHFVALGRRNLNITVLLFDNAVYGLTKGQAAPTLPAWVKTKALSMPNIHDNINPVLLAFAAGYTFIARGYAYHTQQLKELIKTAVRHRGAALVDILQPCPTYNNIMTNKWYEERIYYVDQEEGYDPIIRTPEEFQKKAPAIAAKLMEFGDRIPLGILYWNQTRESFEERLEKIMPGYMSAPPATRRIELEGKPFLHPFDIFKDRLVTP.

[4Fe-4S] cluster-binding residues include cysteine 17, cysteine 20, and cysteine 51. Residues 49–52 (IGCS) and histidine 68 each bind thiamine diphosphate. Aspartate 93 contacts Mg(2+). A thiamine diphosphate-binding site is contributed by 94 to 95 (GD). 2 residues coordinate Mg(2+): asparagine 121 and valine 123. 125–126 (GL) lines the thiamine diphosphate pocket. [4Fe-4S] cluster is bound at residue cysteine 200.

As to quaternary structure, heterodimer composed of an alpha and a beta subunit. [4Fe-4S] cluster is required as a cofactor. Thiamine diphosphate serves as cofactor. It depends on Mg(2+) as a cofactor.

It carries out the reaction a 2-oxocarboxylate + 2 oxidized [2Fe-2S]-[ferredoxin] + CoA = an acyl-CoA + 2 reduced [2Fe-2S]-[ferredoxin] + CO2 + H(+). In terms of biological role, catalyzes the coenzyme A-dependent oxidative decarboxylation of different 2-oxoacids such as pyruvate, 2-oxobutyrate, glyoxylate and 2-oxoglutarate to form their CoA derivatives. The protein is 2-oxoacid:ferredoxin oxidoreductase 2, subunit beta of Aeropyrum pernix (strain ATCC 700893 / DSM 11879 / JCM 9820 / NBRC 100138 / K1).